The primary structure comprises 468 residues: Putative ankyrin repeat protein R873 (468 aa).

14 ANK repeats span residues 38–68 (IKTDIIEYIVDNNLLDVLKYFVVLKNLKHNL), 78–107 (SLNENLVKNCEKGNIEIIKYLLDIGADIEG), 109–137 (DNCAVLTASHHGHIEVVKYLVCKGANFRA), 138–167 (NNDKAVRWASDKGHLDVVKYLVSQGSDIRS), 169–197 (NDCSICWASGNGHLEMVKYLVSQGVNIRT), 198–227 (NDDWAIRLASENGHLEVVKYLVSQGADIRS), 229–257 (DDHAIKWASGNGHLEMVKYLVSQSSNIIA), 258–287 (EDNYAVRWASENGHLEVIKYLVSQGSNITS), 289–316 (YYTIIAASKNGHIDIVKYLVSQGVNIRD), 317–346 (CDSSAVQIASENGHLEVVKYLVSQGIDFRE), 348–376 (DDLTFDMALRKGHVEIVKYLVGQGVDFRV), 378–406 (DDYPVRMASHCGRLGVVKYFVSQGADVRA), 407–436 (EDDYAVRMSAEKGHIEVVKFLVDNGANIRA), and 438–466 (NDYAVRLASENGHIKIVEYLVSMGAVLNK).

The protein is Putative ankyrin repeat protein R873 of Acanthamoeba polyphaga mimivirus (APMV).